The chain runs to 319 residues: GATA transcription factor 18 (319 aa).

A compositionally biased stretch (low complexity) spans 1–15 (MPDAAAAAAAAQDAD). Positions 1–74 (MPDAAAAAAA…AAPEPVSALL (74 aa)) are disordered. A compositionally biased stretch (acidic residues) spans 31-60 (DNDDDDGDDGTEEDEEEDDDEEGDEEELPP). One can recognise a Tify domain in the interval 74-109 (LPGSPNQLTLLFQGEVYVFESVTPEKVQAVLLLLGR). A CCT domain is found at 143 to 185 (RVASLIRFREKRKERNFDKKIRYAVRKEVALRMQRRKGQFAGR). The GATA-type zinc-finger motif lies at 215–242 (CQNCGTSEKMTPAMRRGPAGPRTLCNAC). The interval 292 to 319 (ITASHGEVMGDSTPANEAEIGAPKAQSQ) is disordered.

This sequence belongs to the type IV zinc-finger family. Class C subfamily.

It localises to the nucleus. Transcriptional activator that specifically binds 5'-GATA-3' or 5'-GAT-3' motifs within gene promoters. In Oryza sativa subsp. japonica (Rice), this protein is GATA transcription factor 18.